Here is a 332-residue protein sequence, read N- to C-terminus: Torsin-1A (332 aa).

Residues 1–20 (MKLGRAVLGLLLLAPSVVQA) form the signal peptide. Residues 91 to 251 (KPKKPLTLSL…VSVFNNKNSG (161 aa)) form an interaction with SNAPIN region. Position 102–109 (102–109 (GWTGTGKN)) interacts with ATP. Asparagine 143 and asparagine 158 each carry an N-linked (GlcNAc...) (high mannose) asparagine glycan. Residues 251-332 (GFWHSSLIDR…FTKLDYYYDD (82 aa)) are interaction with KLC1. The tract at residues 312-332 (RVFSDKGCKTVFTKLDYYYDD) is interaction with SYNE3.

Belongs to the ClpA/ClpB family. Torsin subfamily. In terms of assembly, homohexamer. Interacts with TOR1B; the interaction may be specific of neural tissues. Interacts (ATP-bound) with TOR1AIP1 and TOR1AIP2; the interactions induce ATPase activity. Interacts with KLHL14; preferentially when ATP-free. Interacts with KLC1 (via TPR repeats); the interaction associates TOR1A with the kinesin oligomeric complex. Interacts with COPS4; the interaction associates TOR1A with the CSN complex. Interacts with SNAPIN; the interaction is direct and associates SNAPIN with the CSN complex. Interacts with STON2. Interacts (ATP-bound) with SYNE3 (via KASH domain); the interaction is required for SYNE3 nuclear envelope localization. Interacts with VIM; the interaction associates TOR1A with the cytoskeleton. Interacts with PLEC. Interacts (ATP-bound) with SLC6A3; regulates SLC6A3 transport to the plasma membrane. N-glycosylated. In terms of tissue distribution, widely expressed. Highest levels in kidney and liver. In the brain, high levels found in the dopaminergic neurons of the substantia nigra pars compacta, as well as in the neocortex, hippocampus and cerebellum. Also highly expressed in the spinal cord.

The protein localises to the endoplasmic reticulum lumen. It is found in the nucleus membrane. It localises to the cell projection. Its subcellular location is the growth cone. The protein resides in the cytoplasmic vesicle membrane. The protein localises to the cytoplasmic vesicle. It is found in the secretory vesicle. It localises to the synaptic vesicle. Its subcellular location is the cytoplasm. The protein resides in the cytoskeleton. The catalysed reaction is ATP + H2O = ADP + phosphate + H(+). In terms of biological role, protein with chaperone functions important for the control of protein folding, processing, stability and localization as well as for the reduction of misfolded protein aggregates. Involved in the regulation of synaptic vesicle recycling, controls STON2 protein stability in collaboration with the COP9 signalosome complex (CSN). In the nucleus, may link the cytoskeleton with the nuclear envelope, this mechanism seems to be crucial for the control of nuclear polarity, cell movement and, specifically in neurons, nuclear envelope integrity. Participates in the cellular trafficking and may regulate the subcellular location of multipass membrane proteins such as the dopamine transporter SLC6A3, leading to the modulation of dopamine neurotransmission. In the endoplasmic reticulum, plays a role in the quality control of protein folding by increasing clearance of misfolded proteins such as SGCE variants or holding them in an intermediate state for proper refolding. May have a redundant function with TOR1B in non-neural tissues. The polypeptide is Torsin-1A (TOR1A) (Homo sapiens (Human)).